A 471-amino-acid polypeptide reads, in one-letter code: 7-dehydrocholesterol reductase (471 aa).

The disordered stretch occupies residues 1–23 (MASKSQHNAPKVKSPNGKAGSQG). Serine 14 carries the phosphoserine modification. 8 helical membrane-spanning segments follow: residues 36 to 56 (LASI…FIMA), 95 to 115 (LYAL…DFCH), 144 to 164 (LQAW…LSWF), 173 to 193 (WIPL…FAMI), 233 to 253 (LFFN…SFAA), 262 to 282 (VTNS…DFFW), 302 to 322 (LGWG…LYLV), and 327 to 347 (QLST…YYIF). Residues lysine 354, arginine 358, leucine 391, tryptophan 396, and 403–404 (NY) each bind NADP(+). The helical transmembrane segment at 416–436 (LACGGGHLLPYFYIIYMTILL) threads the bilayer. NADP(+)-binding positions include aspartate 443, 447–451 (CANKY), and tyrosine 458.

This sequence belongs to the ERG4/ERG24 family. As to quaternary structure, interacts with DHCR24; this interaction regulates DHCR7 activity. Interacts with TMEM147.

It is found in the endoplasmic reticulum membrane. It catalyses the reaction cholesterol + NADP(+) = 7-dehydrocholesterol + NADPH + H(+). It carries out the reaction 7-dehydrodesmosterol + NADPH + H(+) = desmosterol + NADP(+). The catalysed reaction is 5,6alpha-epoxy-5alpha-cholestan-3beta-ol + H2O = 5alpha-cholestane-3beta,5,6beta-triol. The enzyme catalyses 5,6beta-epoxy-5beta-cholestan-3beta-ol + H2O = 5alpha-cholestane-3beta,5,6beta-triol. Its pathway is steroid biosynthesis; cholesterol biosynthesis. In terms of biological role, oxidoreductase that catalyzes the last step of the cholesterol synthesis pathway, which transforms cholesta-5,7-dien-3beta-ol (7-dehydrocholesterol,7-DHC) into cholesterol by reducing the C7-C8 double bond of its sterol core. Can also metabolize cholesta-5,7,24-trien-3beta-ol (7-dehydrodemosterol, 7-DHD) to desmosterol, which is then metabolized by the Delta(24)-sterol reductase (DHCR24) to cholesterol. Modulates ferroptosis (a form of regulated cell death driven by iron-dependent lipid peroxidation) through the metabolic breakdown of the anti-ferroptotic metabolites 7-DHC and 7-DHD which, when accumulated, divert the propagation of peroxyl radical-mediated damage from phospholipid components to its sterol core, protecting plasma and mitochondrial membranes from phospholipid autoxidation. Functionally, component of the microsomal antiestrogen binding site (AEBS), a multiproteic complex at the ER membrane that consists of an association between cholestenol Delta-isomerase/EBP and DHCR7. This complex is responsible for cholesterol-5,6-epoxide hydrolase (ChEH) activity, which consists in the hydration of cholesterol-5,6-epoxides (5,6-EC) into cholestane-3beta,5alpha,6beta-triol (CT). The precise role of each component of this complex has not been described yet. This is 7-dehydrocholesterol reductase (Dhcr7) from Mus musculus (Mouse).